We begin with the raw amino-acid sequence, 276 residues long: O-methyltransferase cnsE (276 aa).

S-adenosyl-L-methionine is bound by residues Gln110, Asp133 to Ala134, and His155.

This sequence belongs to the methyltransferase superfamily. Requires S-adenosyl-L-methionine as cofactor.

It functions in the pathway alkaloid biosynthesis. O-methyltransferase; part of the gene cluster that mediates the biosynthesis of communesins, a prominent class of indole alkaloids with great potential as pharmaceuticals. Communesins are biosynthesized by the coupling of tryptamine and aurantioclavine, two building blocks derived from L-tryptophan. The L-tryptophan decarboxylase cnsB converts L-tryptophan to tryptamine, whereas the tryptophan dimethylallyltransferase cnsF converts L-tryptophan to 4-dimethylallyl tryptophan which is further transformed to aurantioclavine by the aurantioclavine synthase cnsA, probably aided by the catalase cnsD. The cytochrome P450 monooxygenase cnsC catalyzes the heterodimeric coupling between the two different indole moieties, tryptamine and aurantioclavine, to construct vicinal quaternary stereocenters and yield the heptacyclic communesin scaffold. The O-methyltransferase cnsE then methylates the communesin scaffold to produce communesin K, the simplest characterized communesin that contains the heptacyclic core. The dioxygenase cnsJ converts communesin K into communesin I. Acylation to introduce the hexadienyl group at position N16 of communesin I by the acyltransferase cnsK leads to the production of communesin B. The hexadienyl group is produced by the highly reducing polyketide synthase cnsI, before being hydrolytically removed from cnsI by the serine hydrolase cnsH, converted into hexadienyl-CoA by the CoA ligase cnsG, and then transferred to communesin I by cnsK. Surprisingly, cnsK may also be a promiscuous acyltransferase that can tolerate a range of acyl groups, including acetyl-, propionyl-, and butyryl-CoA, which lead to communesins A, G and H respectively. The roles of the alpha-ketoglutarate-dependent dioxygenases cnsM and cnsP have still to be determined. The polypeptide is O-methyltransferase cnsE (Penicillium expansum (Blue mold rot fungus)).